Here is a 401-residue protein sequence, read N- to C-terminus: Tryptophan synthase beta chain (401 aa).

The residue at position 91 (lysine 91) is an N6-(pyridoxal phosphate)lysine.

The protein belongs to the TrpB family. Tetramer of two alpha and two beta chains. It depends on pyridoxal 5'-phosphate as a cofactor.

It catalyses the reaction (1S,2R)-1-C-(indol-3-yl)glycerol 3-phosphate + L-serine = D-glyceraldehyde 3-phosphate + L-tryptophan + H2O. Its pathway is amino-acid biosynthesis; L-tryptophan biosynthesis; L-tryptophan from chorismate: step 5/5. Its function is as follows. The beta subunit is responsible for the synthesis of L-tryptophan from indole and L-serine. In Lactococcus lactis subsp. cremoris (strain SK11), this protein is Tryptophan synthase beta chain.